The following is a 215-amino-acid chain: MSKVYDWFEERLEIQAIADDITSKYVPPHVNIFYCLGGITLTCFLVQVATGFAMTFYYRPTVTEAFASVQYIMTEANFGWLIRSVHRWSASMMVLMMILHVFRVYLTGGFKKPRELTWVTGVVLGVLTASFGVTGYSLPRDQIGYWAVKIVTGVPEAIPVIGAPLVELLRGSASVGQSTLTRFYSLHTFVLPLLTAVFMLMHFPMIRKQGISGPL.

Residues 32–52 traverse the membrane as a helical segment; the sequence is IFYCLGGITLTCFLVQVATGF. Residue C35 coordinates heme c. H86 and H100 together coordinate heme b. Transmembrane regions (helical) follow at residues 90-110, 116-136, and 186-206; these read ASMM…TGGF, LTWV…VTGY, and LHTF…FPMI. Residues H187 and H202 each contribute to the heme b site.

The protein belongs to the cytochrome b family. PetB subfamily. The 4 large subunits of the cytochrome b6-f complex are cytochrome b6, subunit IV (17 kDa polypeptide, PetD), cytochrome f and the Rieske protein, while the 4 small subunits are PetG, PetL, PetM and PetN. The complex functions as a dimer. The cofactor is heme b. Heme c serves as cofactor.

It localises to the plastid. Its subcellular location is the chloroplast thylakoid membrane. In terms of biological role, component of the cytochrome b6-f complex, which mediates electron transfer between photosystem II (PSII) and photosystem I (PSI), cyclic electron flow around PSI, and state transitions. The polypeptide is Cytochrome b6 (Jasminum nudiflorum (Winter jasmine)).